The following is a 123-amino-acid chain: Ribulose bisphosphate carboxylase small subunit, chloroplastic 1 (123 aa).

The residue at position 1 (Met1) is a Methionine derivative.

Belongs to the RuBisCO small chain family. In terms of assembly, heterohexadecamer of 8 large and 8 small subunits.

It is found in the plastid. The protein localises to the chloroplast. Its function is as follows. RuBisCO catalyzes two reactions: the carboxylation of D-ribulose 1,5-bisphosphate, the primary event in carbon dioxide fixation, as well as the oxidative fragmentation of the pentose substrate. Both reactions occur simultaneously and in competition at the same active site. Although the small subunit is not catalytic it is essential for maximal activity. In Spinacia oleracea (Spinach), this protein is Ribulose bisphosphate carboxylase small subunit, chloroplastic 1.